The chain runs to 70 residues: Small ribosomal subunit protein bS21C (70 aa).

The disordered stretch occupies residues 38-70 (YEKPTTERKRKKAAAVARLRKQVRRSMPPKKKY). The span at 45 to 70 (RKRKKAAAVARLRKQVRRSMPPKKKY) shows a compositional bias: basic residues.

It belongs to the bacterial ribosomal protein bS21 family.

In Burkholderia thailandensis (strain ATCC 700388 / DSM 13276 / CCUG 48851 / CIP 106301 / E264), this protein is Small ribosomal subunit protein bS21C.